Consider the following 361-residue polypeptide: Large ribosomal subunit protein uL3 (361 aa).

The span at 1–14 shows a compositional bias: basic residues; that stretch reads MGRGGRRNPGRPRR. Disordered stretches follow at residues 1–33 and 337–361; these read MGRG…PRIR and TSQQ…PASA.

This sequence belongs to the universal ribosomal protein uL3 family. Part of the 50S ribosomal subunit. Forms a cluster with proteins L14 and L24e.

Functionally, one of the primary rRNA binding proteins, it binds directly near the 3'-end of the 23S rRNA, where it nucleates assembly of the 50S subunit. This Methanopyrus kandleri (strain AV19 / DSM 6324 / JCM 9639 / NBRC 100938) protein is Large ribosomal subunit protein uL3.